Consider the following 134-residue polypeptide: MSDLYRFGISLDRELIEAFDRHIKGQGYQSRSEALRDLIRNELLRKTTAEGGLVAGAIVMTYDHHKRELVNRLIDIQHDFHDLIISTQHVHLDHENCLEVIAVKGNAPDIEKLSSALKVLVGVKHLDLSLSSAD.

Residues His-78, His-89, His-91, and Cys-97 each coordinate Ni(2+).

Belongs to the transcriptional regulatory CopG/NikR family. Ni(2+) is required as a cofactor.

Its function is as follows. Transcriptional regulator. The chain is Putative nickel-responsive regulator from Chlorobaculum parvum (strain DSM 263 / NCIMB 8327) (Chlorobium vibrioforme subsp. thiosulfatophilum).